The following is a 1502-amino-acid chain: Heme-responsive zinc finger transcription factor HAP1 (1502 aa).

A compositionally biased stretch (polar residues) spans 1-50 (MSNTPYNSSVPSIASMTQSSVSRSPNMHTATTPGANTSSNSPPLHMSSDS). A disordered region spans residues 1 to 56 (MSNTPYNSSVPSIASMTQSSVSRSPNMHTATTPGANTSSNSPPLHMSSDSSKIKRK). Residues Cys-64, Cys-67, Cys-74, Cys-81, Cys-84, and Cys-93 each coordinate Zn(2+). The zn(2)-C6 fungal-type DNA-binding region spans 64–93 (CTICRKRKVKCDKLRPHCQQCTKTGVAHLC). The stretch at 105-134 (EKELLKDNELKKLRERVKSLEKTLSKVHSS) forms a coiled coil. Positions 126–208 (KTLSKVHSSP…ANSSSLSISN (83 aa)) are disordered. Residues 130-142 (KVHSSPSSNSLKS) are compositionally biased toward low complexity. Polar residues-rich tracts occupy residues 143–152 (YNTPESSNLF) and 160–176 (TLVN…SHMH). Residues 177-208 (QQQQQQQQQEQQQDFSRSANANANSSSLSISN) are compositionally biased toward low complexity. The tract at residues 244 to 444 (KGDPYLKLLW…NTIPHHQPQS (201 aa)) is heme-responsive; required for HMC formation. 6 HRM repeats span residues 280 to 285 (KCPINH), 299 to 304 (KCPVDH), 323 to 328 (KCPVDH), 347 to 352 (RCPVDH), 389 to 394 (KCPVDH), and 415 to 420 (RCPIDH). Composition is skewed to polar residues over residues 432–447 (STHN…SGSH) and 706–734 (QLNA…NPTL). Disordered regions lie at residues 432-458 (STHN…SRKH) and 706-767 (QLNA…KENQ). The segment covering 735-759 (NNNMSAATTNSSSRSGSADSRSGSN) has biased composition (low complexity). An HRM 7 repeat occupies 1192-1197 (KCPVYQ). Residues 1384–1411 (TANTDTSANGSALSTLTSPQGSDLASNS) are disordered. The span at 1388-1411 (DTSANGSALSTLTSPQGSDLASNS) shows a compositional bias: polar residues.

In terms of assembly, binds DNA as a homodimer. Interacts with SRO9 and YDJ1. In the absence of heme, binds to at least four cellular proteins, including YDJ1 and SRO9, forming a high-molecular-weight complex (HMC) which results in repression of its activity and dictates its DNA-binding specificity.

The protein localises to the nucleus. In terms of biological role, regulation of oxygen dependent gene expression. It modulates the expression of Iso-1 (CYP1) and Iso-2 (CYP3) cytochrome c. In response to heme, promotes transcription of genes encoding functions required for respiration, controlling oxidative damage and repression of anaerobic genes. Binds to the sequence 5'-CGGNNNTNNCGG-3'. Is non-functional in terms of iso-1 cytochrome c expression in strain S288c and its derivatives. The chain is Heme-responsive zinc finger transcription factor HAP1 (HAP1) from Saccharomyces cerevisiae (strain ATCC 204508 / S288c) (Baker's yeast).